A 418-amino-acid polypeptide reads, in one-letter code: L-rhamnose isomerase (418 aa).

Mn(2+)-binding residues include histidine 262, aspartate 294, and aspartate 296.

This sequence belongs to the rhamnose isomerase family. Homotetramer. Mn(2+) is required as a cofactor.

Its subcellular location is the cytoplasm. The enzyme catalyses L-rhamnopyranose = L-rhamnulose. It participates in carbohydrate degradation; L-rhamnose degradation; glycerone phosphate from L-rhamnose: step 1/3. Functionally, catalyzes the interconversion of L-rhamnose and L-rhamnulose. The protein is L-rhamnose isomerase of Yersinia pseudotuberculosis serotype O:1b (strain IP 31758).